Reading from the N-terminus, the 187-residue chain is Elongation factor P 2 (187 aa).

It belongs to the elongation factor P family.

The protein localises to the cytoplasm. The protein operates within protein biosynthesis; polypeptide chain elongation. Functionally, involved in peptide bond synthesis. Stimulates efficient translation and peptide-bond synthesis on native or reconstituted 70S ribosomes in vitro. Probably functions indirectly by altering the affinity of the ribosome for aminoacyl-tRNA, thus increasing their reactivity as acceptors for peptidyl transferase. The chain is Elongation factor P 2 from Geobacter sulfurreducens (strain ATCC 51573 / DSM 12127 / PCA).